A 202-amino-acid polypeptide reads, in one-letter code: LexA repressor 2 (202 aa).

The H-T-H motif DNA-binding region spans 28–48 (LADIATRFGFASRSVARKHIT). Catalysis depends on for autocatalytic cleavage activity residues Ser-123 and Lys-160.

This sequence belongs to the peptidase S24 family. As to quaternary structure, homodimer.

The enzyme catalyses Hydrolysis of Ala-|-Gly bond in repressor LexA.. Its function is as follows. Represses a number of genes involved in the response to DNA damage (SOS response), including recA and lexA. In the presence of single-stranded DNA, RecA interacts with LexA causing an autocatalytic cleavage which disrupts the DNA-binding part of LexA, leading to derepression of the SOS regulon and eventually DNA repair. This Pseudomonas putida (strain ATCC 47054 / DSM 6125 / CFBP 8728 / NCIMB 11950 / KT2440) protein is LexA repressor 2.